Here is a 443-residue protein sequence, read N- to C-terminus: Tubulin beta chain (443 aa).

GTP contacts are provided by Gln-11, Glu-69, Ser-138, Gly-142, Thr-143, Gly-144, Asn-204, and Asn-226. Glu-69 serves as a coordination point for Mg(2+).

This sequence belongs to the tubulin family. Dimer of alpha and beta chains. A typical microtubule is a hollow water-filled tube with an outer diameter of 25 nm and an inner diameter of 15 nM. Alpha-beta heterodimers associate head-to-tail to form protofilaments running lengthwise along the microtubule wall with the beta-tubulin subunit facing the microtubule plus end conferring a structural polarity. Microtubules usually have 13 protofilaments but different protofilament numbers can be found in some organisms and specialized cells. The cofactor is Mg(2+).

The protein resides in the cytoplasm. It is found in the cytoskeleton. Functionally, tubulin is the major constituent of microtubules, a cylinder consisting of laterally associated linear protofilaments composed of alpha- and beta-tubulin heterodimers. Microtubules grow by the addition of GTP-tubulin dimers to the microtubule end, where a stabilizing cap forms. Below the cap, tubulin dimers are in GDP-bound state, owing to GTPase activity of alpha-tubulin. This is Tubulin beta chain from Thalassiosira weissflogii (Marine diatom).